A 237-amino-acid chain; its full sequence is Ribosomal RNA small subunit methyltransferase G (237 aa).

S-adenosyl-L-methionine-binding positions include Gly-78, Phe-83, 129-130 (AE), and Arg-148. A disordered region spans residues 218–237 (KKETPNKYPRKAGMPNKRPL).

Belongs to the methyltransferase superfamily. RNA methyltransferase RsmG family.

It is found in the cytoplasm. In terms of biological role, specifically methylates the N7 position of a guanine in 16S rRNA. This Streptococcus sanguinis (strain SK36) protein is Ribosomal RNA small subunit methyltransferase G.